Here is a 230-residue protein sequence, read N- to C-terminus: Small ribosomal subunit protein uS3 (230 aa).

Positions V39–R107 constitute a KH type-2 domain. Residues S210–N230 are disordered.

Belongs to the universal ribosomal protein uS3 family. Part of the 30S ribosomal subunit. Forms a tight complex with proteins S10 and S14.

Its function is as follows. Binds the lower part of the 30S subunit head. Binds mRNA in the 70S ribosome, positioning it for translation. This is Small ribosomal subunit protein uS3 from Neisseria meningitidis serogroup C (strain 053442).